We begin with the raw amino-acid sequence, 320 residues long: L-lactate dehydrogenase (320 aa).

NAD(+)-binding positions include Val-18, Asp-39, Arg-44, Tyr-69, and 83-84 (GA). Substrate contacts are provided by Gln-86 and Arg-92. NAD(+) contacts are provided by residues Ser-105, 122–124 (AAN), and Ser-147. Residue 124–127 (NPVD) coordinates substrate. 152–155 (DSSR) is a binding site for substrate. Catalysis depends on His-179, which acts as the Proton acceptor. Residue Tyr-223 is modified to Phosphotyrosine. A substrate-binding site is contributed by Thr-232.

The protein belongs to the LDH/MDH superfamily. LDH family. As to quaternary structure, homotetramer.

Its subcellular location is the cytoplasm. The enzyme catalyses (S)-lactate + NAD(+) = pyruvate + NADH + H(+). It participates in fermentation; pyruvate fermentation to lactate; (S)-lactate from pyruvate: step 1/1. With respect to regulation, the quaternary structure is constitutionally similar to the active conformation of allosteric LDHs, and the regulation is independent of the fructose 1,6-bisphosphate-binding site. In terms of biological role, catalyzes the conversion of lactate to pyruvate. This Lactiplantibacillus pentosus (Lactobacillus pentosus) protein is L-lactate dehydrogenase.